We begin with the raw amino-acid sequence, 338 residues long: TPR repeat-containing protein MJ0941 (338 aa).

TPR repeat units follow at residues 27-62 (LEAVANVLRAYRELFEGNLIKALYYVDKALELEPDF), 63-96 (YLALFLKGLALSAKGEIKEAITTFEELLSYESKN), 97-130 (PITWVFVGQLYGMSGNCDEALKCYNKALGIENRF), 131-164 (LSAFLLKTICLEFLGEYDELLKCYNEVLTYTPNF), 165-198 (VPMWVKKAEILRKLGRYEDALLCLNRALELKPHD), 199-232 (KNALYLKGVLLKRMGKFREALECFKKLIDELNVK), 268-301 (VALWYFKGELYERLGKLDEALKCYEKVIELQPHY), and 302-335 (IKALLSKARIYERQGNIEAAIEYYNKAVENIHKD).

The polypeptide is TPR repeat-containing protein MJ0941 (Methanocaldococcus jannaschii (strain ATCC 43067 / DSM 2661 / JAL-1 / JCM 10045 / NBRC 100440) (Methanococcus jannaschii)).